We begin with the raw amino-acid sequence, 301 residues long: uncharacterized protein (301 aa).

The protein belongs to the asfivirus E301R family. Interacts with host IRF3.

Its function is as follows. Plays a role in the inhibition of host innate immune system by acting as a negatively regulator of type I interferon production. Mechanistically, interacts with and prevents host IRF3 nuclear localization to inhibit its transcriptional activity. This is an uncharacterized protein from African swine fever virus (isolate Pig/Kenya/KEN-50/1950) (ASFV).